Consider the following 149-residue polypeptide: MRIIDNLEQFRQIYASGKKWQRCVEAIENIDNIQPGVAHSIGDSLTYRVETDSATDALFTGHRRYFEVHYYLQGQQKIEYAPKETLQVVEYYRDETDREYLKGCGETVEVHEGQIVICDIHEAYRFICNNAVKKVVLKVTIEDGYFHNK.

As to quaternary structure, heterooctamer of 4 alpha and 4 beta subunits.

In terms of biological role, required for full activity of the EbgA enzyme. Exact function not known. The protein is Evolved beta-galactosidase subunit beta (ebgC) of Escherichia coli O6:H1 (strain CFT073 / ATCC 700928 / UPEC).